Here is a 440-residue protein sequence, read N- to C-terminus: 23S rRNA (uracil(1939)-C(5))-methyltransferase RlmD (440 aa).

In terms of domain architecture, TRAM spans 10–68 (KALPTQAVEITIDNLDHHLTGVGRYQGKACFVEGVLPGEKVSVQITEQKKQYAHARLRQ). [4Fe-4S] cluster-binding residues include cysteine 81, cysteine 87, cysteine 90, and cysteine 169. Positions 272, 301, 306, 322, 349, and 372 each coordinate S-adenosyl-L-methionine. Cysteine 398 (nucleophile) is an active-site residue.

The protein belongs to the class I-like SAM-binding methyltransferase superfamily. RNA M5U methyltransferase family. RlmD subfamily.

The catalysed reaction is uridine(1939) in 23S rRNA + S-adenosyl-L-methionine = 5-methyluridine(1939) in 23S rRNA + S-adenosyl-L-homocysteine + H(+). Catalyzes the formation of 5-methyl-uridine at position 1939 (m5U1939) in 23S rRNA. This Tolumonas auensis (strain DSM 9187 / NBRC 110442 / TA 4) protein is 23S rRNA (uracil(1939)-C(5))-methyltransferase RlmD.